Consider the following 688-residue polypeptide: Potassium-transporting ATPase ATP-binding subunit (688 aa).

4 helical membrane-spanning segments follow: residues 37-57 (FLVY…LVGI), 65-85 (ILGI…AEAI), 219-239 (IALQ…TVSL), and 262-282 (VALL…SIGI). D313 serves as the catalytic 4-aspartylphosphate intermediate. Residues D350, E354, 383 to 390 (FTAKTRMS), and K401 contribute to the ATP site. Mg(2+) contacts are provided by D524 and D528. 3 consecutive transmembrane segments (helical) span residues 594-614 (FAII…LNIM), 622-642 (AIFS…PLAL), and 668-688 (IIVP…IGIV).

This sequence belongs to the cation transport ATPase (P-type) (TC 3.A.3) family. Type IA subfamily. The system is composed of three essential subunits: KdpA, KdpB and KdpC.

The protein resides in the cell membrane. The catalysed reaction is K(+)(out) + ATP + H2O = K(+)(in) + ADP + phosphate + H(+). In terms of biological role, part of the high-affinity ATP-driven potassium transport (or Kdp) system, which catalyzes the hydrolysis of ATP coupled with the electrogenic transport of potassium into the cytoplasm. This subunit is responsible for energy coupling to the transport system and for the release of the potassium ions to the cytoplasm. This Clostridium botulinum (strain Alaska E43 / Type E3) protein is Potassium-transporting ATPase ATP-binding subunit.